The sequence spans 164 residues: 2-keto-3-deoxy-D-glycero-D-galacto-9-phosphonononic acid phosphatase (164 aa).

Residues Asp10 and Asp12 each coordinate Mg(2+). Residues Thr34, Thr54–Glu56, Arg64–Lys67, and Lys80 contribute to the substrate site. A Mg(2+)-binding site is contributed by Asp103. Asn106 provides a ligand contact to substrate.

The protein belongs to the KdsC family. Homotetramer. It depends on Mg(2+) as a cofactor.

It carries out the reaction 3-deoxy-D-glycero-beta-D-galacto-non-2-ulopyranosonate 9-phosphate + H2O = 3-deoxy-D-glycero-beta-D-galacto-non-2-ulopyranosonate + phosphate. Functionally, involved in the biosynthesis of 2-keto-3-deoxy-D-glycero-D-galacto-nononic acid used in cell-wall polysaccharides. Catalyzes the hydrolysis of 2-keto-3-deoxy-D-glycero-D-galacto-9-phosphonononic acid (KDN-9-P) to yield 2-keto-3-deoxy-D-glycero-D-galacto-nononic acid (KDN). Also able to hydrolyze N-acetylneuraminate-9-phosphate (Neu5NAc-9-P), 2-keto-3-deoxy-D-manno-octulosonate-8-phosphate (KDO-8-P), phosphoenolpyruvate (PEP), gluconate 6-phosphate, tyrosine phosphate ester and glucose-6-P as substrate. The sequence is that of 2-keto-3-deoxy-D-glycero-D-galacto-9-phosphonononic acid phosphatase from Bacteroides thetaiotaomicron (strain ATCC 29148 / DSM 2079 / JCM 5827 / CCUG 10774 / NCTC 10582 / VPI-5482 / E50).